The chain runs to 514 residues: Peptide chain release factor 3 (514 aa).

A tr-type G domain is found at 8–268; that stretch reads KKRRTFAIIS…TFLKFAPEPH (261 aa). GTP-binding positions include 17–24, 85–89, and 139–142; these read SHPDAGKT, DTPGH, and NKLD.

The protein belongs to the TRAFAC class translation factor GTPase superfamily. Classic translation factor GTPase family. PrfC subfamily.

Its subcellular location is the cytoplasm. In terms of biological role, increases the formation of ribosomal termination complexes and stimulates activities of RF-1 and RF-2. It binds guanine nucleotides and has strong preference for UGA stop codons. It may interact directly with the ribosome. The stimulation of RF-1 and RF-2 is significantly reduced by GTP and GDP, but not by GMP. The chain is Peptide chain release factor 3 from Streptococcus pneumoniae (strain Hungary19A-6).